A 556-amino-acid chain; its full sequence is 2-succinyl-5-enolpyruvyl-6-hydroxy-3-cyclohexene-1-carboxylate synthase (556 aa).

The protein belongs to the TPP enzyme family. MenD subfamily. As to quaternary structure, homodimer. It depends on Mg(2+) as a cofactor. Requires Mn(2+) as cofactor. The cofactor is thiamine diphosphate.

It catalyses the reaction isochorismate + 2-oxoglutarate + H(+) = 5-enolpyruvoyl-6-hydroxy-2-succinyl-cyclohex-3-ene-1-carboxylate + CO2. It participates in quinol/quinone metabolism; 1,4-dihydroxy-2-naphthoate biosynthesis; 1,4-dihydroxy-2-naphthoate from chorismate: step 2/7. The protein operates within quinol/quinone metabolism; menaquinone biosynthesis. Its function is as follows. Catalyzes the thiamine diphosphate-dependent decarboxylation of 2-oxoglutarate and the subsequent addition of the resulting succinic semialdehyde-thiamine pyrophosphate anion to isochorismate to yield 2-succinyl-5-enolpyruvyl-6-hydroxy-3-cyclohexene-1-carboxylate (SEPHCHC). The chain is 2-succinyl-5-enolpyruvyl-6-hydroxy-3-cyclohexene-1-carboxylate synthase from Salmonella typhimurium (strain LT2 / SGSC1412 / ATCC 700720).